A 1801-amino-acid chain; its full sequence is U3 small nucleolar RNA-associated protein 10 (1801 aa).

The HEAT 1 repeat unit spans residues 582–619; sequence IDFQALVPFVLVALGDVSERIRREAAAVLAALGALYKK. Transmembrane regions (helical) follow at residues 945 to 965 and 1001 to 1021; these read IQSG…AIVN and ALLL…HSVM. HEAT repeat units follow at residues 1045-1082, 1252-1289, 1296-1334, and 1757-1794; these read QTID…AFEH, LSLI…QNPE, NRML…KYGK, and ALLP…VLGE.

The protein belongs to the HEATR1/UTP10 family. Component of the ribosomal small subunit (SSU) processome.

It is found in the nucleus. It localises to the nucleolus. Its subcellular location is the membrane. Involved in nucleolar processing of pre-18S ribosomal RNA. Involved in ribosome biosynthesis. The sequence is that of U3 small nucleolar RNA-associated protein 10 from Aspergillus terreus (strain NIH 2624 / FGSC A1156).